The primary structure comprises 382 residues: Mannitol-1-phosphate 5-dehydrogenase (382 aa).

3 to 14 (ALHFGAGNIGRG) contributes to the NAD(+) binding site.

Belongs to the mannitol dehydrogenase family.

The catalysed reaction is D-mannitol 1-phosphate + NAD(+) = beta-D-fructose 6-phosphate + NADH + H(+). This Salmonella schwarzengrund (strain CVM19633) protein is Mannitol-1-phosphate 5-dehydrogenase.